The chain runs to 267 residues: 2-keto-3-deoxy-L-rhamnonate aldolase (267 aa).

His-49 serves as the catalytic Proton acceptor. Gln-151 is a binding site for substrate. Glu-153 contacts Mg(2+). Positions 178 and 179 each coordinate substrate. Asp-179 is a Mg(2+) binding site.

It belongs to the HpcH/HpaI aldolase family. KDR aldolase subfamily. Homohexamer. Requires Mg(2+) as cofactor.

It carries out the reaction 2-dehydro-3-deoxy-L-rhamnonate = (S)-lactaldehyde + pyruvate. Functionally, catalyzes the reversible retro-aldol cleavage of 2-keto-3-deoxy-L-rhamnonate (KDR) to pyruvate and lactaldehyde. The polypeptide is 2-keto-3-deoxy-L-rhamnonate aldolase (Salmonella dublin (strain CT_02021853)).